The chain runs to 279 residues: Monoacylglycerol lipase (279 aa).

Residue Ser-110 is the Nucleophile of the active site. Active-site charge relay system residues include Asp-226 and His-256.

Belongs to the AB hydrolase superfamily. As to quaternary structure, monomer.

Its subcellular location is the secreted. The protein resides in the cell wall. It carries out the reaction a 1-acylglycerol + H2O = glycerol + a fatty acid + H(+). The enzyme catalyses Hydrolyzes glycerol monoesters of long-chain fatty acids.. It catalyses the reaction 1-butyrylglycerol + H2O = butanoate + glycerol + H(+). The catalysed reaction is 1-octanoylglycerol + H2O = octanoate + glycerol + H(+). It carries out the reaction 1-decanoylglycerol + H2O = decanoate + glycerol + H(+). The enzyme catalyses 1-dodecanoylglycerol + H2O = dodecanoate + glycerol + H(+). It catalyses the reaction 1-tetradecanoylglycerol + H2O = tetradecanoate + glycerol + H(+). The catalysed reaction is 1-(9Z-octadecenoyl)-glycerol + H2O = glycerol + (9Z)-octadecenoate + H(+). It carries out the reaction 2-(9Z-octadecenoyl)-glycerol + H2O = glycerol + (9Z)-octadecenoate + H(+). Inhibited by the serine esterase inhibitors PMSF (100%), E600 (80%) and THL (22%). Virtual screening identified a tautomer of ZINC13451138, known inhibitor for HIV-1 integrase, as a potential inhibitor. Its function is as follows. Involved in the hydrolysis of exogenous host lipids during chronic infection. Catalyzes the hydrolysis of both monoacylglycerols (MAG) and diacylglycerols (DAG), with a preference for MAG. It hydrolyzes 2-MAG, 1-3-MAG and MAG with short, medium and long chain fatty acids such as 1-monobutyroyl-rac-glycerol (MC4), 1-mono-octanoyl-rac-glycerol (MC8), 1-monodecanoyl-rac-glycerol (MC10), 1-monolauroyl-rac-glycerol (MC12), 1-monomyristoyl-rac-glycerol (MC14) and 1-mono-oleyl-rac-glycerol (MC18:1). Also able to hydrolyze DAG with short (DiC6) and medium (DiC10) fatty acid chains, but not with longest fatty acid chains. Can also hydrolyze vinyl laurate (VC12), vinyl butyrate (VC4) and vinyl propionate (VC3). Functionally, induces an inflammatory response and cell apoptosis in the host cells. Increases expression of IL-6, NF-kappaB, TLR-2, TLR-6, TNF-alpha, and MyD88 in mouse alveolar macrophage RAW264.7 cells. Persistent expression induces RAW264.7 cell apoptosis in vitro. In Mycobacterium tuberculosis (strain ATCC 25618 / H37Rv), this protein is Monoacylglycerol lipase.